The sequence spans 137 residues: Large ribosomal subunit protein uL14 (137 aa).

The protein belongs to the universal ribosomal protein uL14 family. As to quaternary structure, part of the 50S ribosomal subunit. Forms a cluster with proteins L3 and L24e, part of which may contact the 16S rRNA in 2 intersubunit bridges.

Functionally, binds to 23S rRNA. Forms part of two intersubunit bridges in the 70S ribosome. This Ignicoccus hospitalis (strain KIN4/I / DSM 18386 / JCM 14125) protein is Large ribosomal subunit protein uL14.